Here is a 255-residue protein sequence, read N- to C-terminus: tRNA (guanine-N(7)-)-methyltransferase (255 aa).

Positions 1–31 are disordered; sequence MMHDDPNEAGLPPHNDAIPDETAEGADEVNP. The segment covering 18–27 has biased composition (acidic residues); the sequence is IPDETAEGAD. Residues Glu86, Glu111, Asp138, and Asp161 each coordinate S-adenosyl-L-methionine. The active site involves Asp161. Substrate is bound by residues Lys165, Asp197, and 232–235; that span reads TKFE.

It belongs to the class I-like SAM-binding methyltransferase superfamily. TrmB family.

It carries out the reaction guanosine(46) in tRNA + S-adenosyl-L-methionine = N(7)-methylguanosine(46) in tRNA + S-adenosyl-L-homocysteine. Its pathway is tRNA modification; N(7)-methylguanine-tRNA biosynthesis. In terms of biological role, catalyzes the formation of N(7)-methylguanine at position 46 (m7G46) in tRNA. The protein is tRNA (guanine-N(7)-)-methyltransferase of Burkholderia cenocepacia (strain HI2424).